A 156-amino-acid polypeptide reads, in one-letter code: Small ribosomal subunit protein uS7 (156 aa).

The protein belongs to the universal ribosomal protein uS7 family. In terms of assembly, part of the 30S ribosomal subunit. Contacts proteins S9 and S11.

One of the primary rRNA binding proteins, it binds directly to 16S rRNA where it nucleates assembly of the head domain of the 30S subunit. Is located at the subunit interface close to the decoding center, probably blocks exit of the E-site tRNA. This Clavibacter michiganensis subsp. michiganensis (strain NCPPB 382) protein is Small ribosomal subunit protein uS7.